Here is a 572-residue protein sequence, read N- to C-terminus: Beta-fructofuranosidase, insoluble isoenzyme CWINV5 (572 aa).

The N-terminal stretch at 1–23 is a signal peptide; sequence MANIVWCNIAMFLLVSLFLTDDA. Residues 54–57 and Gln-73 contribute to the substrate site; that span reads WMND. Residue Asp-57 is part of the active site. Asn-84 is a glycosylation site (N-linked (GlcNAc...) asparagine). 118–119 contributes to the substrate binding site; the sequence is WS. N-linked (GlcNAc...) asparagine glycosylation is found at Asn-152 and Asn-179. Residues 184 to 185 and Glu-239 each bind substrate; that span reads RD. 2 N-linked (GlcNAc...) asparagine glycosylation sites follow: Asn-333 and Asn-438. Cys-434 and Cys-481 are disulfide-bonded.

This sequence belongs to the glycosyl hydrolase 32 family. Expressed in flowers, and, to a lower extent, in leaves.

It is found in the secreted. It localises to the extracellular space. Its subcellular location is the apoplast. The protein localises to the cell wall. It carries out the reaction Hydrolysis of terminal non-reducing beta-D-fructofuranoside residues in beta-D-fructofuranosides.. In Arabidopsis thaliana (Mouse-ear cress), this protein is Beta-fructofuranosidase, insoluble isoenzyme CWINV5 (CWINV5).